The primary structure comprises 262 residues: Sperm microtubule inner protein 6 (262 aa).

Belongs to the SPMIP6 family. In terms of assembly, microtubule inner protein component of sperm flagellar doublet microtubules. Interacts with alpha-tubulin. In terms of tissue distribution, expressed in testis. Strongly expressed in ciliated epithelial cells with lower levels in goblet cells (at protein level).

Its subcellular location is the cytoplasm. The protein localises to the cytoskeleton. The protein resides in the nucleus. It localises to the mitochondrion. It is found in the flagellum axoneme. May participate in intramanchette transport and midpiece formation of the sperm tail. May play a potential role in somatic cell proliferation. The protein is Sperm microtubule inner protein 6 of Homo sapiens (Human).